A 429-amino-acid polypeptide reads, in one-letter code: Ribosomal RNA small subunit methyltransferase B (429 aa).

Residues 254–260 (CAAPGGK), Asp-277, Asp-303, and Asp-322 each bind S-adenosyl-L-methionine. Cys-375 acts as the Nucleophile in catalysis.

Belongs to the class I-like SAM-binding methyltransferase superfamily. RsmB/NOP family.

The protein localises to the cytoplasm. It carries out the reaction cytidine(967) in 16S rRNA + S-adenosyl-L-methionine = 5-methylcytidine(967) in 16S rRNA + S-adenosyl-L-homocysteine + H(+). Its function is as follows. Specifically methylates the cytosine at position 967 (m5C967) of 16S rRNA. The sequence is that of Ribosomal RNA small subunit methyltransferase B from Escherichia coli O157:H7.